We begin with the raw amino-acid sequence, 405 residues long: Opine dehydrogenase (405 aa).

This sequence belongs to the lysopine/nopaline/octopine/opine/vitopine dehydrogenases family.

The polypeptide is Opine dehydrogenase (Haliotis discus hannai (Japanese abalone)).